A 63-amino-acid chain; its full sequence is Conotoxin Vi5.1a (63 aa).

The N-terminal stretch at 1–22 is a signal peptide; the sequence is MRCVPVFIILLLLIPSAPSADA. Positions 23–50 are excised as a propeptide; sequence QPKTKDDVPLASYHDNAERTLQRLWNQR. Proline 62 is modified (proline amide).

The protein belongs to the conotoxin T superfamily. Contains 2 disulfide bonds that can be either 'C1-C3, C2-C4' or 'C1-C4, C2-C3', since these disulfide connectivities have been observed for conotoxins with cysteine framework V (for examples, see AC P0DQQ7 and AC P81755). In terms of tissue distribution, expressed by the venom duct.

The protein resides in the secreted. The chain is Conotoxin Vi5.1a from Conus virgo (Virgin cone).